Consider the following 420-residue polypeptide: UDP-N-acetyl-D-mannosamine dehydrogenase (420 aa).

5 residues coordinate NAD(+): Tyr13, Ile14, Asp33, Thr85, and Thr126. UDP-N-acetyl-alpha-D-mannosaminouronate-binding residues include Arg160, Val161, Lys212, Asn216, Arg219, His250, Arg252, and Gly263. Lys212 serves as the catalytic Proton donor/acceptor. Cys266 (nucleophile) is an active-site residue. Residues Phe330 and Lys331 each contribute to the UDP-N-acetyl-alpha-D-mannosaminouronate site. Arg338 lines the NAD(+) pocket. Lys416 is a binding site for UDP-N-acetyl-alpha-D-mannosaminouronate.

This sequence belongs to the UDP-glucose/GDP-mannose dehydrogenase family. WecC subfamily. In terms of assembly, homodimer.

It catalyses the reaction UDP-N-acetyl-alpha-D-mannosamine + 2 NAD(+) + H2O = UDP-N-acetyl-alpha-D-mannosaminouronate + 2 NADH + 3 H(+). It functions in the pathway bacterial outer membrane biogenesis; enterobacterial common antigen biosynthesis. Catalyzes the four-electron oxidation of UDP-N-acetyl-D-mannosamine (UDP-ManNAc), reducing NAD(+) and releasing UDP-N-acetylmannosaminuronic acid (UDP-ManNAcA). This is UDP-N-acetyl-D-mannosamine dehydrogenase from Yersinia pestis.